A 704-amino-acid chain; its full sequence is ATP-dependent zinc metalloprotease FtsH (704 aa).

Residues 1-17 are Cytoplasmic-facing; sequence MADSAKTPRGKKRRPFT. A helical transmembrane segment spans residues 18 to 38; sequence GLALWIIVALLLGMAMFSLFG. The Extracellular segment spans residues 39-127; it reads RDGYQQIDTQ…DEIASSSWWS (89 aa). The chain crosses the membrane as a helical span at residues 128-148; it reads TLLLSFLPLLIFIGLFWFLIM. Over 149–704 the chain is Cytoplasmic; it reads NAQGGGKAMQ…GSAGTDGTGR (556 aa). 217–224 is a binding site for ATP; it reads GPPGTGKT. His-439 lines the Zn(2+) pocket. Glu-440 is a catalytic residue. Zn(2+) is bound by residues His-443 and Asp-515. A disordered region spans residues 624-704; that stretch reads PREVWISSTE…GSAGTDGTGR (81 aa). Positions 681–704 are enriched in gly residues; sequence PHGGEPGGGGYGYDGSAGTDGTGR.

In the central section; belongs to the AAA ATPase family. This sequence in the C-terminal section; belongs to the peptidase M41 family. In terms of assembly, homohexamer. Zn(2+) is required as a cofactor.

It localises to the cell membrane. In terms of biological role, acts as a processive, ATP-dependent zinc metallopeptidase for both cytoplasmic and membrane proteins. Plays a role in the quality control of integral membrane proteins. In Brachybacterium faecium (strain ATCC 43885 / DSM 4810 / JCM 11609 / LMG 19847 / NBRC 14762 / NCIMB 9860 / 6-10), this protein is ATP-dependent zinc metalloprotease FtsH.